Consider the following 234-residue polypeptide: Large ribosomal subunit protein uL1 (234 aa).

This sequence belongs to the universal ribosomal protein uL1 family. In terms of assembly, part of the 50S ribosomal subunit.

Functionally, binds directly to 23S rRNA. The L1 stalk is quite mobile in the ribosome, and is involved in E site tRNA release. In terms of biological role, protein L1 is also a translational repressor protein, it controls the translation of the L11 operon by binding to its mRNA. This chain is Large ribosomal subunit protein uL1, found in Escherichia coli (strain 55989 / EAEC).